A 307-amino-acid polypeptide reads, in one-letter code: Ribosomal protein L11 methyltransferase (307 aa).

Residues Thr154, Gly178, Asp200, and Asn242 each coordinate S-adenosyl-L-methionine.

This sequence belongs to the methyltransferase superfamily. PrmA family.

Its subcellular location is the cytoplasm. It carries out the reaction L-lysyl-[protein] + 3 S-adenosyl-L-methionine = N(6),N(6),N(6)-trimethyl-L-lysyl-[protein] + 3 S-adenosyl-L-homocysteine + 3 H(+). Methylates ribosomal protein L11. The protein is Ribosomal protein L11 methyltransferase of Syntrophotalea carbinolica (strain DSM 2380 / NBRC 103641 / GraBd1) (Pelobacter carbinolicus).